Consider the following 479-residue polypeptide: BRAP2 RING ZnF UBP domain-containing protein 2 (479 aa).

The RING-type; atypical zinc-finger motif lies at 167-207 (CPVCLERLDQDTGGILTTMCNHSFHCSCISNWPDSSCPVCR). The UBP-type; degenerate zinc finger occupies 201 to 294 (SSCPVCRYCQ…GKLVELNSHG (94 aa)). Positions 218, 221, 230, 233, 238, 245, 249, and 255 each coordinate Zn(2+). The stretch at 328-442 (NELLQAQLEN…MAQMDGESEV (115 aa)) forms a coiled coil. The interval 434-479 (AQMDGESEVSETKEVQDATVSTTNTSSSGAGNVIHANKKKSNRRKG) is disordered. The span at 451–466 (ATVSTTNTSSSGAGNV) shows a compositional bias: low complexity. A compositionally biased stretch (basic residues) spans 469–479 (ANKKKSNRRKG).

In terms of assembly, component of the heteromeric E3 ligase complex made of BRIZ1 and BRIZ2. Forms heterooligomers with BRIZ1 via coiled-coil domains.

The enzyme catalyses S-ubiquitinyl-[E2 ubiquitin-conjugating enzyme]-L-cysteine + [acceptor protein]-L-lysine = [E2 ubiquitin-conjugating enzyme]-L-cysteine + N(6)-ubiquitinyl-[acceptor protein]-L-lysine.. The protein operates within protein modification; protein ubiquitination. Functionally, RING-type ubiquitin E3 ligase that binds ubiquitin and is required for seed germination and post-germination growth. The chain is BRAP2 RING ZnF UBP domain-containing protein 2 from Arabidopsis thaliana (Mouse-ear cress).